We begin with the raw amino-acid sequence, 305 residues long: Ribosomal RNA small subunit methyltransferase H (305 aa).

Residues 47-49, aspartate 66, phenylalanine 93, aspartate 108, and glutamine 115 contribute to the S-adenosyl-L-methionine site; that span reads GGH. The interval 280-305 is disordered; it reads ASAEEQERNPRSRSAKLRIARKRSES. The segment covering 290–305 has biased composition (basic residues); that stretch reads RSRSAKLRIARKRSES.

The protein belongs to the methyltransferase superfamily. RsmH family.

The protein localises to the cytoplasm. The enzyme catalyses cytidine(1402) in 16S rRNA + S-adenosyl-L-methionine = N(4)-methylcytidine(1402) in 16S rRNA + S-adenosyl-L-homocysteine + H(+). In terms of biological role, specifically methylates the N4 position of cytidine in position 1402 (C1402) of 16S rRNA. In Synechococcus sp. (strain WH7803), this protein is Ribosomal RNA small subunit methyltransferase H.